Reading from the N-terminus, the 238-residue chain is Segregation and condensation protein A (238 aa).

This sequence belongs to the ScpA family. As to quaternary structure, component of a cohesin-like complex composed of ScpA, ScpB and the Smc homodimer, in which ScpA and ScpB bind to the head domain of Smc. The presence of the three proteins is required for the association of the complex with DNA.

It is found in the cytoplasm. Participates in chromosomal partition during cell division. May act via the formation of a condensin-like complex containing Smc and ScpB that pull DNA away from mid-cell into both cell halves. The protein is Segregation and condensation protein A of Macrococcus caseolyticus (strain JCSC5402) (Macrococcoides caseolyticum).